A 650-amino-acid polypeptide reads, in one-letter code: ATP-dependent zinc metalloprotease FtsH (650 aa).

Over 1–10 (MKTKKSKSTL) the chain is Cytoplasmic. The chain crosses the membrane as a helical span at residues 11 to 31 (WFWLIILLAIIVTIIIIAVTV). Over 32–123 (KGTTQVISDA…LVYQGSVGMA (92 aa)) the chain is Extracellular. Residues 124–144 (LLVSLAPLLIYVLLFGGIIWF) traverse the membrane as a helical segment. The Cytoplasmic portion of the chain corresponds to 145–650 (MMKSSSGAGA…DIKVEDLDID (506 aa)). Residue 217 to 224 (GPPGTGKT) coordinates ATP. H437 serves as a coordination point for Zn(2+). E438 is a catalytic residue. Residues H441 and D515 each contribute to the Zn(2+) site.

This sequence in the central section; belongs to the AAA ATPase family. The protein in the C-terminal section; belongs to the peptidase M41 family. In terms of assembly, homohexamer. Zn(2+) serves as cofactor.

Its subcellular location is the cell membrane. Acts as a processive, ATP-dependent zinc metallopeptidase for both cytoplasmic and membrane proteins. Plays a role in the quality control of integral membrane proteins. This is ATP-dependent zinc metalloprotease FtsH from Mesoplasma florum (strain ATCC 33453 / NBRC 100688 / NCTC 11704 / L1) (Acholeplasma florum).